Reading from the N-terminus, the 139-residue chain is D-ribose pyranase (139 aa).

Histidine 20 serves as the catalytic Proton donor. Substrate contacts are provided by residues aspartate 28, histidine 106, and 128–130 (YAN).

The protein belongs to the RbsD / FucU family. RbsD subfamily. Homodecamer.

The protein localises to the cytoplasm. The enzyme catalyses beta-D-ribopyranose = beta-D-ribofuranose. It functions in the pathway carbohydrate metabolism; D-ribose degradation; D-ribose 5-phosphate from beta-D-ribopyranose: step 1/2. Functionally, catalyzes the interconversion of beta-pyran and beta-furan forms of D-ribose. In Vibrio campbellii (strain ATCC BAA-1116), this protein is D-ribose pyranase.